Here is a 498-residue protein sequence, read N- to C-terminus: MSIFLCFLLLLPLSLIFLKKLLPSKGKLPPGPKGLPIIGNLHQFGRFLHKSLHKISQEYGPVMLLHFGVVPVIIVSSKEGAEEVLKTHDLETCSRPKTVGSGLFTYNFKDIGFAPYGENWREMRKIAVSELFSQKKLKSFRYIREDESQLLVRKVSKSALETPTSSVNLRKVIFTFAASIICRLSFGQNFCDFVDMETVEELVLESETNLGSLAFADFLPAGWIIDRISGQHSTVMKAFSKLTNFFELVIDDHLKSGKIEDHSDIISVMLDMINKPTEVGSYKVTDDHLKGLMSDVFLAGVNAGSITMIWTMTELSRHPRVMRKLQEEIRAALGPNKEKITEEDLEKVEYLKMVIEEAFRLHPPAPLLLPRLTMSDINIQGYSIPKNTMIQINTYTIGRDPKNWTKPDEFIPERFVDNPIEYKGQHFELLPFGAGRRVCPGMATGITIVELGLLSLLYFFDWSLPNGMTTKDIDMEEDGAFVIAKKVSLELVPTLHRW.

The chain crosses the membrane as a helical span at residues 3-23 (IFLCFLLLLPLSLIFLKKLLP). C439 contributes to the heme binding site.

It belongs to the cytochrome P450 family. Heme serves as cofactor.

It is found in the membrane. This is Cytochrome P450 71B5 (CYP71B5) from Arabidopsis thaliana (Mouse-ear cress).